Here is a 99-residue protein sequence, read N- to C-terminus: MLKLLAFVALLSVSVSANVDMTGFGLPADNHKVALGGPIQESAGLADEGEQQLQLVDVSPQDEGQQNVAHVREMFSNVFNSIKTQREQAMAANGSQPTD.

The first 16 residues, 1-16 (MLKLLAFVALLSVSVS), serve as a signal peptide directing secretion.

In Caenorhabditis elegans, this protein is Putative protein tag-209 (tag-209).